A 372-amino-acid chain; its full sequence is Forkhead box protein F1-B (372 aa).

The interval 1-51 is disordered; the sequence is MTAEIQQPPSQPPAQSSPMSAATDKHGGQPSAMESASCATKTKKTNAGIRR. Low complexity predominate over residues 13–22; it reads PAQSSPMSAA. Positions 54 to 148 form a DNA-binding region, fork-head; sequence KPPYSYIALI…EEGSFRRRPR (95 aa).

At the late gastrula stage, expressed in the presumptive ventrolateral mesoderm. During neurulation and tailbud stages, expressed in the lateral plate mesoderm and in the neural crest-derived structures of the head and branchial arches. During tailbud stages, expressed in the pronephros and pronephros ducts and in cells that migrate from the dorsolateral plate to the ventral region of the embryo (with the notable exception of the heart). These cells may represent hematopoietic or endothelial progenitor cells.

It is found in the nucleus. In terms of biological role, probable transcription factor. Required for smooth muscle (visceral mesoderm) differentiation during gut development. Also required for normal proliferation of the lateral plate mesoderm. Acts as a downstream mediator of bmp4-signaling. The protein is Forkhead box protein F1-B (foxf1-b) of Xenopus laevis (African clawed frog).